Consider the following 309-residue polypeptide: Epidermal retinol dehydrogenase 2 (309 aa).

Residues 11–31 traverse the membrane as a helical segment; sequence LLVFLGKSLLSVLEALLFHVI. 44-68 is a binding site for NADP(+); sequence LITGAGSGLGRLLALQFARLGAVLV. A substrate-binding site is contributed by Ser177. The active-site Proton acceptor is Tyr190. Residues 270–290 form a helical membrane-spanning segment; sequence FLYFIVFLKSILPIKTGILIA.

The protein belongs to the short-chain dehydrogenases/reductases (SDR) family.

Its subcellular location is the endoplasmic reticulum membrane. The catalysed reaction is all-trans-retinol--[retinol-binding protein] + NAD(+) = all-trans-retinal--[retinol-binding protein] + NADH + H(+). Its pathway is cofactor metabolism; retinol metabolism. Its function is as follows. Oxidoreductase with strong preference for NAD. Active in both the oxidative and reductive directions. Oxidizes all-trans-retinol in all-trans-retinaldehyde. No activity was detected with 11-cis-retinol or 11-cis-retinaldehyde as substrates with either NAD(+)/NADH or NADP(+)/NADPH. The sequence is that of Epidermal retinol dehydrogenase 2 from Mus musculus (Mouse).